The sequence spans 756 residues: Virulence factor MDV010 (756 aa).

The first 30 residues, 1 to 30, serve as a signal peptide directing secretion; it reads MPSKSIADHHAGYGVALAIVALLLIHGTAL. Residues 96 to 120 are disordered; that stretch reads EEHITLSSPRTSTKTTNENGHEKDS. Positions 100–113 are enriched in polar residues; sequence TLSSPRTSTKTTNE. N-linked (GlcNAc...) asparagine; by host glycosylation is found at Asn-222, Asn-241, Asn-287, Asn-423, Asn-495, Asn-542, Asn-552, Asn-580, Asn-660, Asn-684, Asn-715, and Asn-744.

It is found in the secreted. May play a role in host immune modulation since the protein is secreted and provides an advantage for growth in vivo while it is completely dispensable in cell culture. This chain is Virulence factor MDV010 (MDV010), found in Gallid herpesvirus 2 (strain Chicken/Md5/ATCC VR-987) (GaHV-2).